We begin with the raw amino-acid sequence, 682 residues long: DNA-directed RNA polymerase subunit beta' (682 aa).

Positions 69, 71, 87, and 90 each coordinate Zn(2+). The Mg(2+) site is built by D489, D491, and D493.

It belongs to the RNA polymerase beta' chain family. RpoC1 subfamily. In plastids the minimal PEP RNA polymerase catalytic core is composed of four subunits: alpha, beta, beta', and beta''. When a (nuclear-encoded) sigma factor is associated with the core the holoenzyme is formed, which can initiate transcription. Requires Mg(2+) as cofactor. Zn(2+) serves as cofactor.

It is found in the plastid. Its subcellular location is the chloroplast. It carries out the reaction RNA(n) + a ribonucleoside 5'-triphosphate = RNA(n+1) + diphosphate. Functionally, DNA-dependent RNA polymerase catalyzes the transcription of DNA into RNA using the four ribonucleoside triphosphates as substrates. The sequence is that of DNA-directed RNA polymerase subunit beta' from Agrostis stolonifera (Creeping bentgrass).